Reading from the N-terminus, the 1384-residue chain is Hepatocyte growth factor receptor (1384 aa).

The signal sequence occupies residues 1–24 (MKAPAVLAPGILVLLFTFVQKSNG). Over 25-933 (ECKEALVKSR…VIVQPDQNFT (909 aa)) the chain is Extracellular. Residues 27–516 (KEALVKSRMN…TGKKITKIPL (490 aa)) enclose the Sema domain. An N-linked (GlcNAc...) asparagine glycan is attached at asparagine 45. 4 disulfide bridges follow: cysteine 95-cysteine 101, cysteine 98-cysteine 160, cysteine 133-cysteine 141, and cysteine 173-cysteine 176. Asparagine 106 carries an N-linked (GlcNAc...) asparagine glycan. The N-linked (GlcNAc...) asparagine glycan is linked to asparagine 149. Residues asparagine 203 and asparagine 359 are each glycosylated (N-linked (GlcNAc...) asparagine). 2 disulfide bridges follow: cysteine 299–cysteine 364 and cysteine 386–cysteine 398. 2 N-linked (GlcNAc...) asparagine glycosylation sites follow: asparagine 400 and asparagine 406. 4 disulfide bridges follow: cysteine 521–cysteine 539, cysteine 527–cysteine 562, cysteine 530–cysteine 546, and cysteine 542–cysteine 552. 3 IPT/TIG domains span residues 564–656 (PTIY…FSYV), 658–740 (PIIT…FIYR), and 743–837 (PIVY…LIYV). Threonine 583 carries O-linked (Man) threonine glycosylation. N-linked (GlcNAc...) asparagine glycans are attached at residues asparagine 608 and asparagine 636. Residues threonine 677 and threonine 762 are each glycosylated (O-linked (Man) threonine). Asparagine 786, asparagine 880, and asparagine 931 each carry an N-linked (GlcNAc...) asparagine glycan. A helical membrane pass occupies residues 934 to 956 (GLIVGVVSVSIILLLLLGLFLWL). At 957 to 1384 (KKRKQIKDLG…NVSGEDDDDT (428 aa)) the chain is on the cytoplasmic side. The residue at position 967 (serine 967) is a Phosphoserine. The residue at position 978 (threonine 978) is a Phosphothreonine. Residues serine 991, serine 998, and serine 1001 each carry the phosphoserine modification. Phosphotyrosine is present on tyrosine 1004. The region spanning 1079-1346 (VHFNEVIGRG…RIAAIFSAFI (268 aa)) is the Protein kinase domain. ATP is bound by residues 1085–1093 (IGRGHFGCV) and lysine 1111. Residue aspartate 1205 is the Proton acceptor of the active site. The tract at residues 1213-1382 (LDEKFTVKVA…QENVSGEDDD (170 aa)) is interaction with RANBP9. Position 1231 is a phosphotyrosine (tyrosine 1231). Phosphotyrosine; by autocatalysis occurs at positions 1235 and 1236. Threonine 1290 bears the Phosphothreonine mark. Residues 1321-1360 (WHPKAELRPSFSELVSRIAAIFSAFIGEHYVHVNATYVNV) form an interaction with MUC20 region. Phosphotyrosine; by autocatalysis is present on residues tyrosine 1350 and tyrosine 1357. Tyrosine 1366 is modified (phosphotyrosine).

It belongs to the protein kinase superfamily. Tyr protein kinase family. In terms of assembly, heterodimer made of an alpha chain (50 kDa) and a beta chain (145 kDa) which are disulfide linked. Binds PLXNB1. Interacts when phosphorylated with downstream effectors including STAT3, PIK3R1, SRC, PCLG1, GRB2 and GAB1. Interacts with SPSB1, SPSB2 and SPSB4. Interacts with INPP5D/SHIP1. When phosphorylated at Tyr-1357, interacts with INPPL1/SHIP2. Interacts with RANBP9 and RANBP10, as well as SPSB1, SPSB2, SPSB3 and SPSB4. SPSB1 binding occurs in the presence and in the absence of HGF, however HGF treatment has a positive effect on this interaction. Interacts with MUC20; prevents interaction with GRB2 and suppresses hepatocyte growth factor-induced cell proliferation. Interacts with GRB10. Interacts with PTPN1 and PTPN2. Interacts with HSP90AA1 and HSP90AB1; the interaction suppresses MET kinase activity. Interacts with tensin TNS3. Interacts (when phosphorylated) with tensin TNS4 (via SH2 domain); the interaction increases MET protein stability by inhibiting MET endocytosis and subsequent lysosomal degradation. Autophosphorylated in response to ligand binding on Tyr-1235 and Tyr-1236 in the kinase domain leading to further phosphorylation of Tyr-1350 and Tyr-1357 in the C-terminal multifunctional docking site. Dephosphorylated by PTPRJ at Tyr-1350 and Tyr-1366. Dephosphorylated by PTPN1 and PTPN2. In terms of processing, ubiquitinated. Ubiquitination by CBL regulates the receptor stability and activity through proteasomal degradation. Post-translationally, O-mannosylation of IPT/TIG domains by TMEM260 is required for protein maturation. O-mannosylated residues are composed of single mannose glycans that are not elongated or modified.

It localises to the membrane. The catalysed reaction is L-tyrosyl-[protein] + ATP = O-phospho-L-tyrosyl-[protein] + ADP + H(+). With respect to regulation, in its inactive state, the C-terminal tail interacts with the catalytic domain and inhibits the kinase activity. Upon ligand binding, the C-terminal tail is displaced and becomes phosphorylated, thus increasing the kinase activity. Functionally, receptor tyrosine kinase that transduces signals from the extracellular matrix into the cytoplasm by binding to hepatocyte growth factor/HGF ligand. Regulates many physiological processes including proliferation, scattering, morphogenesis and survival. Ligand binding at the cell surface induces autophosphorylation of MET on its intracellular domain that provides docking sites for downstream signaling molecules. Following activation by ligand, interacts with the PI3-kinase subunit PIK3R1, PLCG1, SRC, GRB2, STAT3 or the adapter GAB1. Recruitment of these downstream effectors by MET leads to the activation of several signaling cascades including the RAS-ERK, PI3 kinase-AKT, or PLCgamma-PKC. The RAS-ERK activation is associated with the morphogenetic effects while PI3K/AKT coordinates prosurvival effects. During embryonic development, MET signaling plays a role in gastrulation, development and migration of muscles and neuronal precursors, angiogenesis and kidney formation. In adults, participates in wound healing as well as organ regeneration and tissue remodeling. Also promotes differentiation and proliferation of hematopoietic cells. In Ovis aries (Sheep), this protein is Hepatocyte growth factor receptor (MET).